The sequence spans 379 residues: MKNQFLNSYFQLITTIFLISSITIAAEEITSTLKVPNGFKVEIFLNNTIEKPRGITSDQDGNIFIGSGSTFAYFVTKNRKIYTIAKTLQKPIGIDYWDNKLYISSVDKIYVVKNVKEEINKSIKSHKDYTWKMQIFALLPKNNSQMHSGRYIKVDSKNNKLIVNIGSQHNVKIPPKKEAVILSINLKTKKEEIVAFGVRNSVGFDFHPISNEIYFSDNGQDGLGDNIPPDEINVITEYKEHFGFPYVFGKNQKNYGFYNKAPKNTKFIPSIYELPAHVAPLGIHFYRGNNFPKEYINKLFIAEHGSWNRSSPVGYKITTLDIDSKTRTARNYKTFLYGFLKHDKSKFGRPVDIITYYDGSILFTDDFGNKIYRVYYEKI.

Residues Y9–A26 traverse the membrane as a helical segment.

To A.liquefaciens L-sorbosone dehydrogenase.

It is found in the membrane. This is an uncharacterized protein from Borreliella burgdorferi (strain ATCC 35210 / DSM 4680 / CIP 102532 / B31) (Borrelia burgdorferi).